A 344-amino-acid polypeptide reads, in one-letter code: MQSLTIPRPDDWHLHLRDGAMLQTTVPATAAVFHRAVVMPNLVPPVTTVAAAMEYRERILAEIPAGMSFNPLMALYLTADTTPAEIAEAAANEHVIGFKLYPSGATTNSAAGVKSVEALAPVLAAMQEHQVPLLVHGEVTDSDIDIFDRERVFIERHLIPITERFPQLKLVLEHITTADAVKFVENANSNVAATMTPQHLLMNRNDLLVGGIRPHNYCLPILKRRSHQQALQQAALSGNPKFFLGTDSAPHVQANKETACGCAGCYSAPAAIELYAEFFSQHNALDKLANFASVFGADFYQLPRNTETIELVQQPWTVAETVDTATGPMVPYWAGSDLQWKLRG.

The Zn(2+) site is built by His13 and His15. Substrate is bound by residues 15–17 and Asn41; that span reads HLR. Positions 99, 136, and 174 each coordinate Zn(2+). Lys99 carries the N6-carboxylysine modification. Position 136 (His136) interacts with substrate. Leu219 provides a ligand contact to substrate. Position 247 (Asp247) interacts with Zn(2+). Asp247 is a catalytic residue. The substrate site is built by His251 and Ala263.

It belongs to the metallo-dependent hydrolases superfamily. DHOase family. Class II DHOase subfamily. Homodimer. Zn(2+) serves as cofactor.

It catalyses the reaction (S)-dihydroorotate + H2O = N-carbamoyl-L-aspartate + H(+). It participates in pyrimidine metabolism; UMP biosynthesis via de novo pathway; (S)-dihydroorotate from bicarbonate: step 3/3. Catalyzes the reversible cyclization of carbamoyl aspartate to dihydroorotate. This Idiomarina loihiensis (strain ATCC BAA-735 / DSM 15497 / L2-TR) protein is Dihydroorotase.